The following is a 149-amino-acid chain: Nucleoside diphosphate kinase (149 aa).

ATP contacts are provided by Lys-9, Phe-57, Arg-85, Thr-91, Arg-102, and Asn-112. Catalysis depends on His-115, which acts as the Pros-phosphohistidine intermediate.

It belongs to the NDK family. Homotetramer. The cofactor is Mg(2+).

It localises to the cytoplasm. The catalysed reaction is a 2'-deoxyribonucleoside 5'-diphosphate + ATP = a 2'-deoxyribonucleoside 5'-triphosphate + ADP. It carries out the reaction a ribonucleoside 5'-diphosphate + ATP = a ribonucleoside 5'-triphosphate + ADP. Its function is as follows. Major role in the synthesis of nucleoside triphosphates other than ATP. The ATP gamma phosphate is transferred to the NDP beta phosphate via a ping-pong mechanism, using a phosphorylated active-site intermediate. This chain is Nucleoside diphosphate kinase, found in Acaryochloris marina (strain MBIC 11017).